A 1176-amino-acid polypeptide reads, in one-letter code: Leucine--tRNA ligase, cytoplasmic (1176 aa).

The L-leucine site is built by tyrosine 52 and tyrosine 54. The 'HIGH' region motif lies at histidine 60–histidine 63. Residues proline 115–glycine 142 form a disordered region. Acidic residues predominate over residues phenylalanine 117–glutamate 126. The segment covering threonine 127–lysine 139 has biased composition (basic and acidic residues). Serine 167 is subject to Phosphoserine. Residues glycine 260 to glutamate 509 form an editing domain region. Residues leucine 594 and serine 597 each coordinate L-leucine. A 'KMSKS' region motif is present at residues lysine 716–serine 720. Residue lysine 719 participates in ATP binding. The residue at position 720 (serine 720) is a Phosphoserine. An N6-acetyllysine mark is found at lysine 970 and lysine 1047.

This sequence belongs to the class-I aminoacyl-tRNA synthetase family.

It is found in the cytoplasm. The enzyme catalyses tRNA(Leu) + L-leucine + ATP = L-leucyl-tRNA(Leu) + AMP + diphosphate. The catalysed reaction is L-methionyl-tRNA(Leu) + H2O = tRNA(Leu) + L-methionine + H(+). With respect to regulation, 5-fluoro-1,3-dihydro-1-hydroxy-1,2-benzoxaborole inhibits LARS1 by forming a covalent adduct with the 3' adenosine of tRNA(Leu) at the editing site, thus locking the enzyme in an inactive conformation. Aminoacyl-tRNA synthetase that catalyzes the specific attachment of leucine to its cognate tRNA (tRNA(Leu)). It performs tRNA aminoacylation in a two-step reaction: Leu is initially activated by ATP to form a leucyl-adenylate (Leu-AMP) intermediate; then the leucyl moiety is transferred to the acceptor 3' end of the tRNA to yield leucyl-tRNA. To improve the fidelity of catalytic reactions, it is also able to hydrolyze misactivated aminoacyl-adenylate intermediates (pre-transfer editing) and mischarged aminoacyl-tRNAs (post-transfer editing). In Pongo abelii (Sumatran orangutan), this protein is Leucine--tRNA ligase, cytoplasmic (LARS1).